The following is a 186-amino-acid chain: ATP synthase subunit b (186 aa).

Residues 5 to 25 (LILNLLVLLAPAAVFAAGGGH) form a helical membrane-spanning segment.

It belongs to the ATPase B chain family. F-type ATPases have 2 components, F(1) - the catalytic core - and F(0) - the membrane proton channel. F(1) has five subunits: alpha(3), beta(3), gamma(1), delta(1), epsilon(1). F(0) has three main subunits: a(1), b(2) and c(10-14). The alpha and beta chains form an alternating ring which encloses part of the gamma chain. F(1) is attached to F(0) by a central stalk formed by the gamma and epsilon chains, while a peripheral stalk is formed by the delta and b chains.

Its subcellular location is the cell inner membrane. Its function is as follows. F(1)F(0) ATP synthase produces ATP from ADP in the presence of a proton or sodium gradient. F-type ATPases consist of two structural domains, F(1) containing the extramembraneous catalytic core and F(0) containing the membrane proton channel, linked together by a central stalk and a peripheral stalk. During catalysis, ATP synthesis in the catalytic domain of F(1) is coupled via a rotary mechanism of the central stalk subunits to proton translocation. In terms of biological role, component of the F(0) channel, it forms part of the peripheral stalk, linking F(1) to F(0). The chain is ATP synthase subunit b from Bdellovibrio bacteriovorus (strain ATCC 15356 / DSM 50701 / NCIMB 9529 / HD100).